A 247-amino-acid chain; its full sequence is Carboxy-S-adenosyl-L-methionine synthase (247 aa).

S-adenosyl-L-methionine contacts are provided by residues Tyr-40, 65–67 (GSS), 90–91 (DN), 122–123 (DI), Asn-137, and Arg-204.

The protein belongs to the class I-like SAM-binding methyltransferase superfamily. Cx-SAM synthase family. As to quaternary structure, homodimer.

The catalysed reaction is prephenate + S-adenosyl-L-methionine = carboxy-S-adenosyl-L-methionine + 3-phenylpyruvate + H2O. Catalyzes the conversion of S-adenosyl-L-methionine (SAM) to carboxy-S-adenosyl-L-methionine (Cx-SAM). The sequence is that of Carboxy-S-adenosyl-L-methionine synthase from Pseudomonas syringae pv. syringae (strain B728a).